Here is a 291-residue protein sequence, read N- to C-terminus: Phosphatidylglycerol--prolipoprotein diacylglyceryl transferase (291 aa).

Transmembrane regions (helical) follow at residues 24–44 (WYAL…RALL), 64–84 (FILW…VLFY), 99–119 (IWKG…AVIL), and 125–145 (GLPI…GLFL). A 1,2-diacyl-sn-glycero-3-phospho-(1'-sn-glycerol) is bound at residue arginine 147. 3 helical membrane-spanning segments follow: residues 187–207 (ATLE…AGAL), 211–231 (GLVL…GEFF), and 247–267 (MGML…CVAW).

It belongs to the Lgt family.

Its subcellular location is the cell inner membrane. It catalyses the reaction L-cysteinyl-[prolipoprotein] + a 1,2-diacyl-sn-glycero-3-phospho-(1'-sn-glycerol) = an S-1,2-diacyl-sn-glyceryl-L-cysteinyl-[prolipoprotein] + sn-glycerol 1-phosphate + H(+). Its pathway is protein modification; lipoprotein biosynthesis (diacylglyceryl transfer). Catalyzes the transfer of the diacylglyceryl group from phosphatidylglycerol to the sulfhydryl group of the N-terminal cysteine of a prolipoprotein, the first step in the formation of mature lipoproteins. The protein is Phosphatidylglycerol--prolipoprotein diacylglyceryl transferase of Nitrobacter hamburgensis (strain DSM 10229 / NCIMB 13809 / X14).